Reading from the N-terminus, the 772-residue chain is DNA ligase (772 aa).

NAD(+)-binding positions include 80-84 (DAEYD), 130-131 (SL), and Glu160. Lys162 acts as the N6-AMP-lysine intermediate in catalysis. 4 residues coordinate NAD(+): Arg183, Glu220, Lys336, and Lys360. Zn(2+) contacts are provided by Cys454, Cys457, Cys473, and Cys479. Residues 685–772 (APEQTLEGLT…NGPQGITTIG (88 aa)) enclose the BRCT domain.

It belongs to the NAD-dependent DNA ligase family. LigA subfamily. It depends on Mg(2+) as a cofactor. Mn(2+) serves as cofactor.

It catalyses the reaction NAD(+) + (deoxyribonucleotide)n-3'-hydroxyl + 5'-phospho-(deoxyribonucleotide)m = (deoxyribonucleotide)n+m + AMP + beta-nicotinamide D-nucleotide.. Functionally, DNA ligase that catalyzes the formation of phosphodiester linkages between 5'-phosphoryl and 3'-hydroxyl groups in double-stranded DNA using NAD as a coenzyme and as the energy source for the reaction. It is essential for DNA replication and repair of damaged DNA. The polypeptide is DNA ligase (Cutibacterium acnes (strain DSM 16379 / KPA171202) (Propionibacterium acnes)).